The sequence spans 614 residues: Acetylcholinesterase (614 aa).

The signal sequence occupies residues 1-31 (MRPPWYPLHTPSLASPLLFLLLSLLGGGARA). Cysteines 100 and 127 form a disulfide. Serine 234 (acyl-ester intermediate) is an active-site residue. A disulfide bridge links cysteine 288 with cysteine 303. Asparagine 296 carries an N-linked (GlcNAc...) asparagine glycan. Glutamate 365 acts as the Charge relay system in catalysis. Asparagine 381 carries N-linked (GlcNAc...) asparagine glycosylation. Cysteine 440 and cysteine 560 are oxidised to a cystine. The Charge relay system role is filled by histidine 478. Residue asparagine 495 is glycosylated (N-linked (GlcNAc...) asparagine).

It belongs to the type-B carboxylesterase/lipase family. In terms of assembly, homotetramer; composed of disulfide-linked homodimers. Catalytic forms H (GPI-anchor dimer) and T (asymmetric collagen-tailed), which differ in their C-terminus, account for all types of known ACHE forms. Interacts with PRIMA1. The interaction with PRIMA1 is required to anchor it to the basal lamina of cells and organize into tetramers. In terms of tissue distribution, has been found in central nervous system and muscle. Found in embryonic liver and spleen but not in adult liver.

It is found in the synapse. The protein localises to the secreted. It localises to the cell membrane. The catalysed reaction is acetylcholine + H2O = choline + acetate + H(+). Its function is as follows. Terminates signal transduction at the neuromuscular junction by rapid hydrolysis of the acetylcholine released into the synaptic cleft. The chain is Acetylcholinesterase (Ache) from Rattus norvegicus (Rat).